The following is a 565-amino-acid chain: Protein nucleotidyltransferase YdiU (565 aa).

Residues glycine 118, glycine 120, arginine 121, lysine 141, aspartate 153, glycine 154, arginine 211, and arginine 218 each contribute to the ATP site. The active-site Proton acceptor is aspartate 290. Residues asparagine 291 and aspartate 300 each coordinate Mg(2+). An ATP-binding site is contributed by aspartate 300.

Belongs to the SELO family. The cofactor is Mg(2+). It depends on Mn(2+) as a cofactor.

The enzyme catalyses L-seryl-[protein] + ATP = 3-O-(5'-adenylyl)-L-seryl-[protein] + diphosphate. It catalyses the reaction L-threonyl-[protein] + ATP = 3-O-(5'-adenylyl)-L-threonyl-[protein] + diphosphate. The catalysed reaction is L-tyrosyl-[protein] + ATP = O-(5'-adenylyl)-L-tyrosyl-[protein] + diphosphate. It carries out the reaction L-histidyl-[protein] + UTP = N(tele)-(5'-uridylyl)-L-histidyl-[protein] + diphosphate. The enzyme catalyses L-seryl-[protein] + UTP = O-(5'-uridylyl)-L-seryl-[protein] + diphosphate. It catalyses the reaction L-tyrosyl-[protein] + UTP = O-(5'-uridylyl)-L-tyrosyl-[protein] + diphosphate. Functionally, nucleotidyltransferase involved in the post-translational modification of proteins. It can catalyze the addition of adenosine monophosphate (AMP) or uridine monophosphate (UMP) to a protein, resulting in modifications known as AMPylation and UMPylation. The polypeptide is Protein nucleotidyltransferase YdiU (Nitrosospira multiformis (strain ATCC 25196 / NCIMB 11849 / C 71)).